Reading from the N-terminus, the 144-residue chain is Interleukin-9 (144 aa).

Positions 1–18 are cleaved as a signal peptide; the sequence is MLLAMVLTSALLLCSVAG. At glutamine 19 the chain carries Pyrrolidone carboxylic acid. N-linked (GlcNAc...) asparagine glycosylation is found at asparagine 50, asparagine 63, asparagine 78, and asparagine 114.

This sequence belongs to the IL-7/IL-9 family. In terms of assembly, interacts with IL9R. Interacts with IL2RG.

It is found in the secreted. Its function is as follows. Multifunctional cytokine secreted mainly by T-helper 2 lymphocytes and also mast cells or NKT cells that plays important roles in the immune response against parasites. Affects intestinal epithelial permeability and adaptive immunity. In addition, induces the differentiation of specific T-cell subsets such as IL-17 producing helper T-cells (TH17) and also proliferation and differentiation of mast cells. Mechanistically, exerts its biological effects through a receptor composed of IL9R subunit and a signal transducing subunit IL2RG. Receptor stimulation results in the rapid activation of JAK1 and JAK3 kinase activities leading to STAT1, STAT3 and STAT5-mediated transcriptional programs. Induction of differentiation genes seems to be mediated by STAT1 alone, while protection of cells from apoptosis depends on STAT3 and STAT5. The polypeptide is Interleukin-9 (IL9) (Homo sapiens (Human)).